The primary structure comprises 178 residues: Cell division protein SepF (178 aa).

Residues 19 to 45 (EHYESEHHTPHKDEDDSMEHDREERRA) are compositionally biased toward basic and acidic residues. The disordered stretch occupies residues 19–65 (EHYESEHHTPHKDEDDSMEHDREERRAPAPVREIARETPTPHAAEEE).

This sequence belongs to the SepF family. As to quaternary structure, homodimer. Interacts with FtsZ.

It is found in the cytoplasm. In terms of biological role, cell division protein that is part of the divisome complex and is recruited early to the Z-ring. Probably stimulates Z-ring formation, perhaps through the cross-linking of FtsZ protofilaments. Its function overlaps with FtsA. The protein is Cell division protein SepF of Arthrobacter sp. (strain FB24).